The primary structure comprises 354 residues: Protein-glutamate methylesterase/protein-glutamine glutaminase 2 (354 aa).

A Response regulatory domain is found at 3-120; that stretch reads RVVVVDDSMS…PADLADYARD (118 aa). The residue at position 54 (D54) is a 4-aspartylphosphate. Positions 164–354 constitute a CheB-type methylesterase domain; that stretch reads ATRLSRVIAI…MGARLSEALQ (191 aa). Catalysis depends on residues S176, H202, and D298.

Belongs to the CheB family. Phosphorylated by CheA. Phosphorylation of the N-terminal regulatory domain activates the methylesterase activity.

The protein localises to the cytoplasm. It catalyses the reaction [protein]-L-glutamate 5-O-methyl ester + H2O = L-glutamyl-[protein] + methanol + H(+). The catalysed reaction is L-glutaminyl-[protein] + H2O = L-glutamyl-[protein] + NH4(+). Its function is as follows. Involved in chemotaxis. Part of a chemotaxis signal transduction system that modulates chemotaxis in response to various stimuli. Catalyzes the demethylation of specific methylglutamate residues introduced into the chemoreceptors (methyl-accepting chemotaxis proteins or MCP) by CheR. Also mediates the irreversible deamidation of specific glutamine residues to glutamic acid. The protein is Protein-glutamate methylesterase/protein-glutamine glutaminase 2 of Burkholderia thailandensis (strain ATCC 700388 / DSM 13276 / CCUG 48851 / CIP 106301 / E264).